The following is a 249-amino-acid chain: MIT domain-containing protein 1 (249 aa).

The MIT domain occupies 8 to 86; the sequence is QDPQSTAAAT…KYLDQEKEDG (79 aa). The tract at residues 168 to 231 is important for association with membranes; it reads RGLQEIEESL…SLGYCDFDLR (64 aa).

Homodimer. Interacts (via MIT domain) with CHMP1A, CHMP1B, CHMP2A and IST1.

The protein localises to the late endosome membrane. It is found in the midbody. Its subcellular location is the membrane. Required for efficient abscission at the end of cytokinesis, together with components of the ESCRT-III complex. The chain is MIT domain-containing protein 1 (MITD1) from Homo sapiens (Human).